Here is a 341-residue protein sequence, read N- to C-terminus: tRNA N6-adenosine threonylcarbamoyltransferase (341 aa).

Residues H111 and H115 each contribute to the Fe cation site. Residues 134-138, D167, G180, and N276 each bind substrate; that span reads LVSGG. D304 lines the Fe cation pocket.

The protein belongs to the KAE1 / TsaD family. Requires Fe(2+) as cofactor.

It is found in the cytoplasm. The catalysed reaction is L-threonylcarbamoyladenylate + adenosine(37) in tRNA = N(6)-L-threonylcarbamoyladenosine(37) in tRNA + AMP + H(+). In terms of biological role, required for the formation of a threonylcarbamoyl group on adenosine at position 37 (t(6)A37) in tRNAs that read codons beginning with adenine. Is involved in the transfer of the threonylcarbamoyl moiety of threonylcarbamoyl-AMP (TC-AMP) to the N6 group of A37, together with TsaE and TsaB. TsaD likely plays a direct catalytic role in this reaction. This chain is tRNA N6-adenosine threonylcarbamoyltransferase, found in Azotobacter vinelandii (strain DJ / ATCC BAA-1303).